A 681-amino-acid polypeptide reads, in one-letter code: PAB-dependent poly(A)-specific ribonuclease subunit pan3-like (681 aa).

The C3H1-type zinc-finger motif lies at 9-38 (FSTNIPCRNEQLYGRCPYIDKGCFFQHKNQ). Disordered stretches follow at residues 38–58 (QDNA…PQNS) and 82–123 (SSAS…TVSL). Over residues 41-50 (APASSKPPSA) the composition is skewed to low complexity. Residues 96–106 (KSYSSALSSGK) show a composition bias toward polar residues. Phosphoserine is present on Ser-165.

The protein belongs to the protein kinase superfamily. PAN3 family.

The protein resides in the cytoplasm. In terms of biological role, regulatory subunit of the poly(A)-nuclease (PAN) deadenylation complex. The chain is PAB-dependent poly(A)-specific ribonuclease subunit pan3-like from Schizosaccharomyces pombe (strain 972 / ATCC 24843) (Fission yeast).